The primary structure comprises 303 residues: Probable 5-dehydro-4-deoxyglucarate dehydratase (303 aa).

The protein belongs to the DapA family.

The enzyme catalyses 5-dehydro-4-deoxy-D-glucarate + H(+) = 2,5-dioxopentanoate + CO2 + H2O. The protein operates within carbohydrate acid metabolism; D-glucarate degradation; 2,5-dioxopentanoate from D-glucarate: step 2/2. The protein is Probable 5-dehydro-4-deoxyglucarate dehydratase of Acinetobacter baylyi (strain ATCC 33305 / BD413 / ADP1).